Reading from the N-terminus, the 421-residue chain is MREIINKLNPIIIDKADKKFGVSRILKKYDGKPVYIKDVNGFEVVGNLCSRETLSKIFNVKKEDFIFFMLDAMEKEKEGKLKINNKLKEKYIVEIPENIKNWPIPIYYEKDAGAYITSGVVVVYDKDYGYNLSIHRILVKDDYLVIRMVEQRHLHFLYNKALKEKGYLDVAIVIGVHPAVLLAGSTSADITFDELKFAAALLGGEIGVFELDNGLLVPEAEFIIEGKILPEVDDEGPFVDITGTYDIVRKQPIIKIEKLYRKEKPIFHALLPGGIEHKTLMGMPQEPRILKGVRNTVPTVKNIVLTEGGCCWLHAVVQIEKRTEGDGKNAILAAFASHPSLKHVIVVDDDINIFDINDVEYAIATRVQGDKDIVIISGAKGSSLDPSSDLKNKLTAKVGVDATMSLIKGREHFERAKIPDK.

Positions 131 and 194 each coordinate Mn(2+). D240 functions as the Proton acceptor in the catalytic mechanism.

It belongs to the UbiD family. It depends on prenylated FMN as a cofactor. Requires Mn(2+) as cofactor.

It catalyses the reaction (2E)-3-methyl-5-phosphooxypent-2-enoate + H(+) = isopentenyl phosphate + CO2. Its pathway is isoprenoid biosynthesis; isopentenyl diphosphate biosynthesis via mevalonate pathway. Catalyzes the conversion of trans-anhydromevalonate 5-phosphate (tAHMP) into isopentenyl phosphate. Involved in the archaeal mevalonate (MVA) pathway, which provides fundamental precursors for isoprenoid biosynthesis, such as isopentenyl diphosphate (IPP) and dimethylallyl diphosphate (DMAPP). The protein is Anhydromevalonate phosphate decarboxylase of Methanocaldococcus jannaschii (strain ATCC 43067 / DSM 2661 / JAL-1 / JCM 10045 / NBRC 100440) (Methanococcus jannaschii).